A 44-amino-acid chain; its full sequence is Photosystem I reaction center subunit IX (44 aa).

Residues 7–27 form a helical membrane-spanning segment; sequence YLSVAPVLATLWFGSLAGLLI.

It belongs to the PsaJ family.

It is found in the plastid. Its subcellular location is the chloroplast thylakoid membrane. May help in the organization of the PsaE and PsaF subunits. This is Photosystem I reaction center subunit IX from Illicium oligandrum (Star anise).